Here is a 105-residue protein sequence, read N- to C-terminus: uncharacterized protein (105 aa).

2 consecutive transmembrane segments (helical) span residues 26-46 and 66-86; these read NVLI…CIAI and SALA…TLAI.

The protein localises to the cell membrane. This is an uncharacterized protein from Mycoplasma pneumoniae (strain ATCC 29342 / M129 / Subtype 1) (Mycoplasmoides pneumoniae).